Reading from the N-terminus, the 427-residue chain is UPF0229 protein YeaH (427 aa).

Positions 84–110 (QSDRIERPQGGGGGSGSGQGQASQDGE) are disordered. Gly residues predominate over residues 92–102 (QGGGGGSGSGQ).

This sequence belongs to the UPF0229 family.

The polypeptide is UPF0229 protein YeaH (Escherichia fergusonii (strain ATCC 35469 / DSM 13698 / CCUG 18766 / IAM 14443 / JCM 21226 / LMG 7866 / NBRC 102419 / NCTC 12128 / CDC 0568-73)).